A 318-amino-acid polypeptide reads, in one-letter code: MATLEQPYLDLLNKIMIEGHDKEDRTGTGTRSIFGAQMRFNLSEGFPILTTKRVPFGLIKSELLWFLRGDTNIRFLLEHNNHIWDEWAFKNWVESDEYHGPDMTNFGLRSQEDAKFKQVYQEEMKKFDERILADRDFAVKFGNLGDVYGAQWRHWQKREGGFIDQIQNVIDQIKKTPYSRRLIVSAWNPEDVPNSALPPCHVLFQFYVNDGRLSVQLYQRSGDMFLGVPFNIASYSLLVNLIAQETGLKPGEFIHTLGDAHIYRNHFDQVKELLTRKPYDSPKLWLNPDKKKIEDFEMSDIKLVDYKHHGTIKAPVAV.

DUMP contacts are provided by residues R25 and 180 to 181 (RR). The active-site Nucleophile is C200. DUMP is bound by residues 220-223 (RSGD), N231, and 261-263 (HIY). D223 lines the (6R)-5,10-methylene-5,6,7,8-tetrahydrofolate pocket. Residue A317 coordinates (6R)-5,10-methylene-5,6,7,8-tetrahydrofolate.

It belongs to the thymidylate synthase family. Bacterial-type ThyA subfamily. As to quaternary structure, homodimer.

Its subcellular location is the cytoplasm. The enzyme catalyses dUMP + (6R)-5,10-methylene-5,6,7,8-tetrahydrofolate = 7,8-dihydrofolate + dTMP. The protein operates within pyrimidine metabolism; dTTP biosynthesis. Its function is as follows. Catalyzes the reductive methylation of 2'-deoxyuridine-5'-monophosphate (dUMP) to 2'-deoxythymidine-5'-monophosphate (dTMP) while utilizing 5,10-methylenetetrahydrofolate (mTHF) as the methyl donor and reductant in the reaction, yielding dihydrofolate (DHF) as a by-product. This enzymatic reaction provides an intracellular de novo source of dTMP, an essential precursor for DNA biosynthesis. The sequence is that of Thymidylate synthase from Lactobacillus gasseri (strain ATCC 33323 / DSM 20243 / BCRC 14619 / CIP 102991 / JCM 1131 / KCTC 3163 / NCIMB 11718 / NCTC 13722 / AM63).